The sequence spans 333 residues: 1,5-anhydro-D-fructose reductase (333 aa).

NADP(+) is bound by residues 9–12, 33–34, R38, 71–76, 93–94, N120, 162–163, and Y283; these read ASTI, SS, TTNELH, EK, and WR.

The protein belongs to the Gfo/Idh/MocA family. In terms of assembly, monomer.

It catalyses the reaction 1,5-anhydro-D-mannitol + NADP(+) = 1,5-anhydro-D-fructose + NADPH + H(+). Its function is as follows. Catalyzes the NADPH-specific reduction of 1,5-anhydro-D-fructose to 1,5-anhydro-D-mannitol. This is 1,5-anhydro-D-fructose reductase (afr) from Rhizobium meliloti (strain 1021) (Ensifer meliloti).